We begin with the raw amino-acid sequence, 279 residues long: Protein CMSS1 (279 aa).

Positions 1–10 (MADDLGDEWW) are enriched in acidic residues. Residues 1 to 89 (MADDLGDEWW…DVLAKSEPKP (89 aa)) are disordered. Polar residues predominate over residues 12–22 (NQPTGAGSSPE). 2 positions are modified to phosphoserine: Ser19 and Ser24. At Arg167 the chain carries Omega-N-methylarginine. Thr212 is modified (phosphothreonine).

The protein belongs to the CMS1 family.

The chain is Protein CMSS1 (CMSS1) from Homo sapiens (Human).